Consider the following 456-residue polypeptide: tRNA modification GTPase MnmE (456 aa).

(6S)-5-formyl-5,6,7,8-tetrahydrofolate is bound by residues Arg-23, Glu-80, and Lys-122. Residues 218 to 380 (AKRIVIVGPP…LKKHLSNRQK (163 aa)) form the TrmE-type G domain. Asn-228 is a binding site for K(+). GTP is bound by residues 228–233 (NAGKSS), 247–253 (TDLPGTT), and 272–275 (DTAG). Ser-232 lines the Mg(2+) pocket. K(+) contacts are provided by Thr-247, Leu-249, and Thr-252. Thr-253 is a binding site for Mg(2+). Lys-456 is a binding site for (6S)-5-formyl-5,6,7,8-tetrahydrofolate.

This sequence belongs to the TRAFAC class TrmE-Era-EngA-EngB-Septin-like GTPase superfamily. TrmE GTPase family. In terms of assembly, homodimer. Heterotetramer of two MnmE and two MnmG subunits. The cofactor is K(+).

The protein resides in the cytoplasm. Exhibits a very high intrinsic GTPase hydrolysis rate. Involved in the addition of a carboxymethylaminomethyl (cmnm) group at the wobble position (U34) of certain tRNAs, forming tRNA-cmnm(5)s(2)U34. In Buchnera aphidicola subsp. Schizaphis graminum (strain Sg), this protein is tRNA modification GTPase MnmE.